Reading from the N-terminus, the 153-residue chain is D-aminoacyl-tRNA deacylase (153 aa).

The short motif at 137-138 (GP) is the Gly-cisPro motif, important for rejection of L-amino acids element.

This sequence belongs to the DTD family. As to quaternary structure, homodimer.

It localises to the cytoplasm. It carries out the reaction glycyl-tRNA(Ala) + H2O = tRNA(Ala) + glycine + H(+). It catalyses the reaction a D-aminoacyl-tRNA + H2O = a tRNA + a D-alpha-amino acid + H(+). In terms of biological role, an aminoacyl-tRNA editing enzyme that deacylates mischarged D-aminoacyl-tRNAs. Also deacylates mischarged glycyl-tRNA(Ala), protecting cells against glycine mischarging by AlaRS. Acts via tRNA-based rather than protein-based catalysis; rejects L-amino acids rather than detecting D-amino acids in the active site. By recycling D-aminoacyl-tRNA to D-amino acids and free tRNA molecules, this enzyme counteracts the toxicity associated with the formation of D-aminoacyl-tRNA entities in vivo and helps enforce protein L-homochirality. The protein is D-aminoacyl-tRNA deacylase of Methylococcus capsulatus (strain ATCC 33009 / NCIMB 11132 / Bath).